Reading from the N-terminus, the 215-residue chain is Large ribosomal subunit protein uL3 (215 aa).

An N5-methylglutamine modification is found at Gln-151.

This sequence belongs to the universal ribosomal protein uL3 family. As to quaternary structure, part of the 50S ribosomal subunit. Forms a cluster with proteins L14 and L19. Post-translationally, methylated by PrmB.

One of the primary rRNA binding proteins, it binds directly near the 3'-end of the 23S rRNA, where it nucleates assembly of the 50S subunit. This Rickettsia bellii (strain OSU 85-389) protein is Large ribosomal subunit protein uL3.